The following is a 479-amino-acid chain: ATP synthase subunit beta (479 aa).

An ATP-binding site is contributed by 160–167 (GGAGVGKT).

The protein belongs to the ATPase alpha/beta chains family. F-type ATPases have 2 components, CF(1) - the catalytic core - and CF(0) - the membrane proton channel. CF(1) has five subunits: alpha(3), beta(3), gamma(1), delta(1), epsilon(1). CF(0) has three main subunits: a(1), b(2) and c(9-12). The alpha and beta chains form an alternating ring which encloses part of the gamma chain. CF(1) is attached to CF(0) by a central stalk formed by the gamma and epsilon chains, while a peripheral stalk is formed by the delta and b chains.

It localises to the cell inner membrane. The enzyme catalyses ATP + H2O + 4 H(+)(in) = ADP + phosphate + 5 H(+)(out). In terms of biological role, produces ATP from ADP in the presence of a proton gradient across the membrane. The catalytic sites are hosted primarily by the beta subunits. This Anaplasma phagocytophilum (strain HZ) protein is ATP synthase subunit beta.